The sequence spans 41 residues: Large ribosomal subunit protein bL36 (41 aa).

This sequence belongs to the bacterial ribosomal protein bL36 family.

In Stenotrophomonas maltophilia (strain R551-3), this protein is Large ribosomal subunit protein bL36.